The primary structure comprises 705 residues: Ribosomal RNA large subunit methyltransferase K/L (705 aa).

The region spanning 43–154 (VVYRCCLWSR…GEKGILGFDL (112 aa)) is the THUMP domain.

Belongs to the methyltransferase superfamily. RlmKL family.

It localises to the cytoplasm. The enzyme catalyses guanosine(2445) in 23S rRNA + S-adenosyl-L-methionine = N(2)-methylguanosine(2445) in 23S rRNA + S-adenosyl-L-homocysteine + H(+). It carries out the reaction guanosine(2069) in 23S rRNA + S-adenosyl-L-methionine = N(2)-methylguanosine(2069) in 23S rRNA + S-adenosyl-L-homocysteine + H(+). Functionally, specifically methylates the guanine in position 2445 (m2G2445) and the guanine in position 2069 (m7G2069) of 23S rRNA. This is Ribosomal RNA large subunit methyltransferase K/L from Aliivibrio fischeri (strain MJ11) (Vibrio fischeri).